The sequence spans 456 residues: Antizyme inhibitor 2 (456 aa).

The active-site Proton donor; shared with dimeric partner is the C357.

It belongs to the Orn/Lys/Arg decarboxylase class-II family. ODC antizyme inhibitor subfamily. As to quaternary structure, monomer. Interacts with OAZ1; this interaction disrupts the interaction between the antizyme and ODC1. Does not form a heterodimer with ODC1.

It localises to the nucleus. The protein resides in the cytoplasm. Its subcellular location is the perinuclear region. The protein localises to the membrane. It is found in the cytoplasmic vesicle. It localises to the endoplasmic reticulum-Golgi intermediate compartment. The protein resides in the golgi apparatus. Its subcellular location is the cis-Golgi network. The protein localises to the trans-Golgi network. It is found in the cytoplasmic granule. It localises to the cell projection. The protein resides in the axon. Its subcellular location is the dendrite. The protein localises to the perikaryon. Functionally, antizyme inhibitor (AZI) protein that positively regulates ornithine decarboxylase (ODC) activity and polyamine uptake. AZI is an enzymatically inactive ODC homolog that counteracts the negative effect of ODC antizyme (AZ) on ODC activity by competing with ODC for antizyme-binding. Inhibits antizyme-dependent ODC degradation and releases ODC monomers from their inactive complex with antizymes, leading to formation of the catalytically active ODC homodimer and restoring polyamine production. Participates in the morphological integrity of the trans-Golgi network (TGN) and functions as a regulator of intracellular secretory vesicle trafficking. In Xenopus laevis (African clawed frog), this protein is Antizyme inhibitor 2 (azin2).